The chain runs to 64 residues: Large ribosomal subunit protein uL29 (64 aa).

The protein belongs to the universal ribosomal protein uL29 family.

The chain is Large ribosomal subunit protein uL29 from Pseudomonas entomophila (strain L48).